A 130-amino-acid polypeptide reads, in one-letter code: MAYAIIETGGKQVRVEPGRFYDIELLSAEPDEKVTIESVLLVQNDGEVTIGQPLVAGATVQGTVLRHLRGRKVLVYKMKPKKKTRKKRGHRQEITRLLIDSITFNGTVLTAPTASAETADATPDTETAAE.

This sequence belongs to the bacterial ribosomal protein bL21 family. In terms of assembly, part of the 50S ribosomal subunit. Contacts protein L20.

Functionally, this protein binds to 23S rRNA in the presence of protein L20. The protein is Large ribosomal subunit protein bL21 of Trichormus variabilis (strain ATCC 29413 / PCC 7937) (Anabaena variabilis).